Reading from the N-terminus, the 176-residue chain is MSGYMISPEYYFIYWFLKYYLSPMIANASPVLVKGIHRIDFSHIFIDGKPLFGKNKTWEGFYVGVLMGFLTSIGIGIILCEEEYILIGLGSSIFALIGDLLGSFIKRRMNIASGEPLPIIDQLDFALMATLYYYFLGIEEFISYPLYILYSLIIILALHIITNNIAYYLGVKDKRW.

5 consecutive transmembrane segments (helical) span residues 12–32 (FIYWFLKYYLSPMIANASPVL), 60–80 (GFYVGVLMGFLTSIGIGIILC), 85–105 (ILIGLGSSIFALIGDLLGSFI), 118–138 (PIIDQLDFALMATLYYYFLGI), and 141–161 (FISYPLYILYSLIIILALHII).

It belongs to the CDP-archaeol synthase family. Mg(2+) serves as cofactor.

The protein resides in the cell membrane. The catalysed reaction is 2,3-bis-O-(geranylgeranyl)-sn-glycerol 1-phosphate + CTP + H(+) = CDP-2,3-bis-O-(geranylgeranyl)-sn-glycerol + diphosphate. Its pathway is membrane lipid metabolism; glycerophospholipid metabolism. Catalyzes the formation of CDP-2,3-bis-(O-geranylgeranyl)-sn-glycerol (CDP-archaeol) from 2,3-bis-(O-geranylgeranyl)-sn-glycerol 1-phosphate (DGGGP) and CTP. This reaction is the third ether-bond-formation step in the biosynthesis of archaeal membrane lipids. This chain is CDP-archaeol synthase, found in Staphylothermus marinus (strain ATCC 43588 / DSM 3639 / JCM 9404 / F1).